Reading from the N-terminus, the 295-residue chain is Nucleotide-binding protein YvcJ (295 aa).

16-23 (GMSGAGKT) is a binding site for ATP. A GTP-binding site is contributed by 67–70 (DLRG).

The protein belongs to the RapZ-like family.

In terms of biological role, displays ATPase and GTPase activities. Can also hydrolyze pNPP. May affect the expression of competence via the phosphorylation of a cellular component. In Bacillus subtilis (strain 168), this protein is Nucleotide-binding protein YvcJ (yvcJ).